The primary structure comprises 382 residues: UDP-4-amino-4-deoxy-L-arabinose--oxoglutarate aminotransferase (382 aa).

The residue at position 183 (Lys183) is an N6-(pyridoxal phosphate)lysine.

The protein belongs to the DegT/DnrJ/EryC1 family. ArnB subfamily. As to quaternary structure, homodimer. The cofactor is pyridoxal 5'-phosphate.

The catalysed reaction is UDP-4-amino-4-deoxy-beta-L-arabinose + 2-oxoglutarate = UDP-beta-L-threo-pentopyranos-4-ulose + L-glutamate. It functions in the pathway nucleotide-sugar biosynthesis; UDP-4-deoxy-4-formamido-beta-L-arabinose biosynthesis; UDP-4-deoxy-4-formamido-beta-L-arabinose from UDP-alpha-D-glucuronate: step 2/3. Its pathway is bacterial outer membrane biogenesis; lipopolysaccharide biosynthesis. Catalyzes the conversion of UDP-4-keto-arabinose (UDP-Ara4O) to UDP-4-amino-4-deoxy-L-arabinose (UDP-L-Ara4N). The modified arabinose is attached to lipid A and is required for resistance to polymyxin and cationic antimicrobial peptides. The sequence is that of UDP-4-amino-4-deoxy-L-arabinose--oxoglutarate aminotransferase from Pseudomonas aeruginosa (strain UCBPP-PA14).